A 379-amino-acid polypeptide reads, in one-letter code: Type II methyltransferase M.CvrRI (379 aa).

The protein belongs to the N(4)/N(6)-methyltransferase family.

The catalysed reaction is a 2'-deoxyadenosine in DNA + S-adenosyl-L-methionine = an N(6)-methyl-2'-deoxyadenosine in DNA + S-adenosyl-L-homocysteine + H(+). Functionally, a gamma subtype methylase, recognizes the double-stranded sequence 5'-TGCA-3', methylates A-4 on both strands, and protects the DNA from cleavage by the CviRI endonuclease. In Chlorella (PBCV-XZ-6E), this protein is Type II methyltransferase M.CvrRI (CVIRIM).